Here is a 141-residue protein sequence, read N- to C-terminus: Lutropin subunit beta (141 aa).

Positions 1-20 (MEMLQGLLLWLLLSMGGARA) are cleaved as a signal peptide. Disulfide bonds link C29–C77, C43–C92, C46–C130, C54–C108, C58–C110, and C113–C120. N33 and N50 each carry an N-linked (GlcNAc...) asparagine glycan.

The protein belongs to the glycoprotein hormones subunit beta family. As to quaternary structure, heterodimer of a common alpha chain and a unique beta chain which confers biological specificity to thyrotropin, lutropin, follitropin and gonadotropin.

It localises to the secreted. Functionally, promotes spermatogenesis and ovulation by stimulating the testes and ovaries to synthesize steroids. This Macaca fascicularis (Crab-eating macaque) protein is Lutropin subunit beta (LHB).